The following is a 429-amino-acid chain: Threonine synthase (429 aa).

Residue Lys-108 is modified to N6-(pyridoxal phosphate)lysine.

This sequence belongs to the threonine synthase family. Pyridoxal 5'-phosphate serves as cofactor.

It catalyses the reaction O-phospho-L-homoserine + H2O = L-threonine + phosphate. It participates in amino-acid biosynthesis; L-threonine biosynthesis; L-threonine from L-aspartate: step 5/5. Its function is as follows. Catalyzes the gamma-elimination of phosphate from L-phosphohomoserine and the beta-addition of water to produce L-threonine. This Buchnera aphidicola subsp. Schizaphis graminum (strain Sg) protein is Threonine synthase (thrC).